The following is a 270-amino-acid chain: Probable septum site-determining protein MinC (270 aa).

Residues aspartate 105–alanine 129 form a disordered region. The span at glutamate 116–alanine 129 shows a compositional bias: low complexity.

The protein belongs to the MinC family. Interacts with MinD and FtsZ.

Its function is as follows. Cell division inhibitor that blocks the formation of polar Z ring septums. Rapidly oscillates between the poles of the cell to destabilize FtsZ filaments that have formed before they mature into polar Z rings. Prevents FtsZ polymerization. The protein is Probable septum site-determining protein MinC of Burkholderia pseudomallei (strain 1106a).